A 209-amino-acid polypeptide reads, in one-letter code: ATP phosphoribosyltransferase (209 aa).

This sequence belongs to the ATP phosphoribosyltransferase family. Short subfamily. Heteromultimer composed of HisG and HisZ subunits.

Its subcellular location is the cytoplasm. It catalyses the reaction 1-(5-phospho-beta-D-ribosyl)-ATP + diphosphate = 5-phospho-alpha-D-ribose 1-diphosphate + ATP. It functions in the pathway amino-acid biosynthesis; L-histidine biosynthesis; L-histidine from 5-phospho-alpha-D-ribose 1-diphosphate: step 1/9. Its function is as follows. Catalyzes the condensation of ATP and 5-phosphoribose 1-diphosphate to form N'-(5'-phosphoribosyl)-ATP (PR-ATP). Has a crucial role in the pathway because the rate of histidine biosynthesis seems to be controlled primarily by regulation of HisG enzymatic activity. The polypeptide is ATP phosphoribosyltransferase (Sulfurimonas denitrificans (strain ATCC 33889 / DSM 1251) (Thiomicrospira denitrificans (strain ATCC 33889 / DSM 1251))).